The primary structure comprises 147 residues: Large ribosomal subunit protein bL9 (147 aa).

Belongs to the bacterial ribosomal protein bL9 family.

Its function is as follows. Binds to the 23S rRNA. The sequence is that of Large ribosomal subunit protein bL9 from Campylobacter jejuni subsp. jejuni serotype O:2 (strain ATCC 700819 / NCTC 11168).